The following is a 261-amino-acid chain: MTHQTHAYHMVNPSPWPLTGALSALLMTSGLIMWFHFNSTTLLMLGLTTNMLTMYQWWRDVVRESTFQGHHTPNVQKGLRYGMILFIISEVLFFTGFFWAFYHSSLAPTPELGGCWPPTGINPLNPLEVPLLNTSVLLASGVSITWAHHSLMEGNRNHMLQALFITIALGVYFTLLQASEYYEAPFTISDGVYGSTFFVATGFHGLHVIIGSTFLIVCFFRQLKFHFTSNHHFGFEAAAWYWHFVDVVWLFLYVSIYWWGS.

Over 1–15 (MTHQTHAYHMVNPSP) the chain is Mitochondrial matrix. The helical transmembrane segment at 16–34 (WPLTGALSALLMTSGLIMW) threads the bilayer. Over 35–40 (FHFNST) the chain is Mitochondrial intermembrane. A helical transmembrane segment spans residues 41–66 (TLLMLGLTTNMLTMYQWWRDVVREST). The Mitochondrial matrix segment spans residues 67 to 72 (FQGHHT). The chain crosses the membrane as a helical span at residues 73–105 (PNVQKGLRYGMILFIISEVLFFTGFFWAFYHSS). Over 106-128 (LAPTPELGGCWPPTGINPLNPLE) the chain is Mitochondrial intermembrane. A helical transmembrane segment spans residues 129 to 152 (VPLLNTSVLLASGVSITWAHHSLM). Topologically, residues 153–155 (EGN) are mitochondrial matrix. Residues 156 to 183 (RNHMLQALFITIALGVYFTLLQASEYYE) form a helical membrane-spanning segment. Over 184-190 (APFTISD) the chain is Mitochondrial intermembrane. The chain crosses the membrane as a helical span at residues 191-223 (GVYGSTFFVATGFHGLHVIIGSTFLIVCFFRQL). Topologically, residues 224–232 (KFHFTSNHH) are mitochondrial matrix. A helical membrane pass occupies residues 233–256 (FGFEAAAWYWHFVDVVWLFLYVSI). Over 257–261 (YWWGS) the chain is Mitochondrial intermembrane.

This sequence belongs to the cytochrome c oxidase subunit 3 family. In terms of assembly, component of the cytochrome c oxidase (complex IV, CIV), a multisubunit enzyme composed of 14 subunits. The complex is composed of a catalytic core of 3 subunits MT-CO1, MT-CO2 and MT-CO3, encoded in the mitochondrial DNA, and 11 supernumerary subunits COX4I, COX5A, COX5B, COX6A, COX6B, COX6C, COX7A, COX7B, COX7C, COX8 and NDUFA4, which are encoded in the nuclear genome. The complex exists as a monomer or a dimer and forms supercomplexes (SCs) in the inner mitochondrial membrane with NADH-ubiquinone oxidoreductase (complex I, CI) and ubiquinol-cytochrome c oxidoreductase (cytochrome b-c1 complex, complex III, CIII), resulting in different assemblies (supercomplex SCI(1)III(2)IV(1) and megacomplex MCI(2)III(2)IV(2)).

The protein resides in the mitochondrion inner membrane. It carries out the reaction 4 Fe(II)-[cytochrome c] + O2 + 8 H(+)(in) = 4 Fe(III)-[cytochrome c] + 2 H2O + 4 H(+)(out). Functionally, component of the cytochrome c oxidase, the last enzyme in the mitochondrial electron transport chain which drives oxidative phosphorylation. The respiratory chain contains 3 multisubunit complexes succinate dehydrogenase (complex II, CII), ubiquinol-cytochrome c oxidoreductase (cytochrome b-c1 complex, complex III, CIII) and cytochrome c oxidase (complex IV, CIV), that cooperate to transfer electrons derived from NADH and succinate to molecular oxygen, creating an electrochemical gradient over the inner membrane that drives transmembrane transport and the ATP synthase. Cytochrome c oxidase is the component of the respiratory chain that catalyzes the reduction of oxygen to water. Electrons originating from reduced cytochrome c in the intermembrane space (IMS) are transferred via the dinuclear copper A center (CU(A)) of subunit 2 and heme A of subunit 1 to the active site in subunit 1, a binuclear center (BNC) formed by heme A3 and copper B (CU(B)). The BNC reduces molecular oxygen to 2 water molecules using 4 electrons from cytochrome c in the IMS and 4 protons from the mitochondrial matrix. This chain is Cytochrome c oxidase subunit 3 (MT-CO3), found in Gazella leptoceros (Sand gazelle).